The following is a 1551-amino-acid chain: MASSAPSSSSCTFQAESSFGPAVASCRRAFDFTLYFEEVVFVLVPSCVFILLAATRLLFILRRARRFTTATAATTTSTDTSSSHSCGNAAQNQHTPIGHGLAHHHILQQCTAGLLVTLHVAGLILLCTTVPSRQRTDLSVPASVVAALAFGVVPVLAHFEHKRRRPSSGPRSSSLLVGLFLCVAVLLRAPLVRTHAALYGSGSALVAVEIASLVLQLVLIAVGEVSSWAADATSNFSPEESAGFLGRSFGSWLWGTFVTGYRTTLSLDSLVPIDSSLESRIVATSFDHILPVSPSGKPGKNGQYRLLLALFRSLGLYALAPVIPRLCLAGFTLAQPFLASATINYIGNGPAPDRDGYGLIGATFLIYTGIAVSTGWYWSLSYKNVTKIRGGLVDGVSQKMLRLSQQHGTESKVLTMMINDVYRITSTLAYAHELWVAPIETAIGTWMLCRHVGPPGLVVLGIIGVCLGASTYVGKHMAIQQGVWLAAVERRIGATKKMLASIKAIKMMGAGPSVAEALERLRRLEFAASRKFRALIVGTLLSSYSTATLAPVLVFGTYIGATTAAADFSASTLFTSLIWISLLASPLIQLLQIIPSFGAALGSLERIDAFFEKQEFTDERDEATAVDSSCSEKGEKKKEHVSLSIHNSSFSYTDDSEDSILKDVNLVINRGQHVVVTGPAGCGKSLLLQAILGEVAPQNSGSRVCVDGKVAFCSQTPWLENLSARQVVSRFSRDKDPSWTDRVVDACELREFLEAQDPDATIGSQGSALARAIQSRPDILLLDDVLSPIDYVTKKRILRQLFGKSGILHETGTTVFQVTQDHAVAQLADIVLRLDETGALRPYQFPPSQADVEDENGDVDNGAENTRPRESSHTTEAQSGPPEPKSKPTEITDRKVYATYFESIGFLNLVLFIGGGIIFAFCLKFPNVWVGWWTADSSDPDEASHNIGYWFGIYAMLNVLPLIAVAGWVAQLMMLIVPLSGSKLHRKLVDTVSKATFSFISRVDTGSLLNRFNQDLMFVDSRLPLDLFNTAAALLTGIAQVILIGVSAVYVLASIPVLAAVLFLLQHFYLRTSKQLRHLDLQSKAELHTRLSESYQGLATIRAARWQRQVHAEFQAGLDRSQAPVYLLWTVQTWLKLVLNLVVAGLALVVMGAAVGLHQHGSSSGASASASGIGIAFLNLTTLGETMTNLLTAWTSLETTLGAIARMVSFSRDTPAERDVLVRPDSLDHGGGGGGDRAEPPESWPESGGIKLEGVWATYDDDDESDENTDDSGGRPATDVAADGEKHEATTITTTSSTMTTTRYALQDISLEVRPGERVAVCGRTGSGKSTLLLALLGLVAVRRGRISIDGRDVAGVPRARLRGAVHVIPQDPFISVASGNGETIREALDPAGKLGDEEVTDVLQDCGVLDKIVGAGGLAASVSDEALSLSAGERQLFVLARLICRAGGRCRHGGGGILLLDEATSSLDVNTDGKTAEVLRKWLPNMTVLSVLHRLEAALKYDRVVVLEGGRVAHVVTPSESTVSSDIFAFFGRSRSFLESRETGGVSWLE.

7 helical membrane passes run Leu34–Ala54, Cys110–Val130, Ser139–Phe159, Ser172–Val192, Gly202–Val222, Leu314–Ala334, and Gly358–Trp378. The region spanning Leu326–Ala599 is the ABC transmembrane type-1 1 domain. Asn384 carries N-linked (GlcNAc...) asparagine glycosylation. 4 helical membrane passes run Leu428–Leu448, Val452–Tyr472, Leu535–Phe555, and Leu577–Phe597. An ABC transporter 1 domain is found at Ile645–Asn861. The N-linked (GlcNAc...) asparagine glycan is linked to Asn647. Residue Gly678–Ser685 coordinates ATP. Asn721 carries an N-linked (GlcNAc...) asparagine glycan. The interval Tyr843–Thr889 is disordered. The next 4 membrane-spanning stretches (helical) occupy residues Ser903–Leu923, Val959–Leu979, Leu1027–Ile1044, and Leu1137–Leu1157. Residues Val910–Thr1199 enclose the ABC transmembrane type-1 2 domain. Asn1179 carries N-linked (GlcNAc...) asparagine glycosylation. The span at Asp1219–Asp1228 shows a compositional bias: basic and acidic residues. Residues Asp1219–Ser1296 form a disordered region. Residues Tyr1259 to Asp1270 are compositionally biased toward acidic residues. One can recognise an ABC transporter 2 domain in the interval His1287–Ser1535. An ATP-binding site is contributed by Gly1323–Ser1330. N-linked (GlcNAc...) asparagine glycosylation occurs at Asn1486.

It belongs to the ABC transporter superfamily. ABCC family. Conjugate transporter (TC 3.A.1.208) subfamily.

It localises to the membrane. ABC-type transporter; part of the gene cluster that mediates the biosynthesis of the phomopsins, a group of hexapeptide mycotoxins which infects lupins and causes lupinosis disease in livestock. This Diaporthe leptostromiformis (Lupinosis disease fungus) protein is ABC-type transporter phomO.